The primary structure comprises 239 residues: Transcription factor MYB10 (239 aa).

2 HTH myb-type domains span residues Lys-11–Leu-63 and Arg-64–Leu-118. 2 consecutive DNA-binding regions (H-T-H motif) follow at residues Trp-39–Leu-63 and Trp-91–Leu-114.

As to expression, expressed in cauline leaves and siliques.

The protein resides in the nucleus. In terms of biological role, involved in metal ions homeostasis, including iron ions (Fe) acquisition, via the regulation of NAS4 and NAS2 genes expression. Necessary for plant survival in alkaline soil where iron availability is greatly restricted. Triggers tolerance to nickel (Ni) and zinc (Zn) ions. The sequence is that of Transcription factor MYB10 from Arabidopsis thaliana (Mouse-ear cress).